We begin with the raw amino-acid sequence, 150 residues long: Macrodomain Ter protein (150 aa).

This sequence belongs to the MatP family. Homodimer.

The protein resides in the cytoplasm. Functionally, required for spatial organization of the terminus region of the chromosome (Ter macrodomain) during the cell cycle. Prevents early segregation of duplicated Ter macrodomains during cell division. Binds specifically to matS, which is a 13 bp signature motif repeated within the Ter macrodomain. The protein is Macrodomain Ter protein of Shigella boydii serotype 18 (strain CDC 3083-94 / BS512).